The following is a 391-amino-acid chain: Terminal nucleotidyltransferase 5C (391 aa).

Belongs to the TENT family. Interacts with BCCIP and PABPC1; the interaction has no effect on TENT5C poly(A) polymerase function. Interacts with PLK4; this interaction leads to the TENT5C recruitment into the centrosome.

It localises to the nucleus. The protein localises to the cytoplasm. The protein resides in the cytoskeleton. It is found in the microtubule organizing center. Its subcellular location is the centrosome. The enzyme catalyses RNA(n) + ATP = RNA(n)-3'-adenine ribonucleotide + diphosphate. Functionally, catalyzes the transfer of one adenosine molecule from an ATP to an mRNA poly(A) tail bearing a 3'-OH terminal group and enhances mRNA stability and gene expression. Can also elongate RNA oligos ending with uridine molecule, provided that the sequence is adenosine-rich. Mainly targets mRNAs encoding endoplasmic reticulum-targeted protein. Its function is as follows. (Microbial infection) Seems to enhance replication of some viruses, including yellow fever virus, in response to type I interferon. This is Terminal nucleotidyltransferase 5C from Homo sapiens (Human).